Reading from the N-terminus, the 710-residue chain is FAST kinase domain-containing protein 2, mitochondrial (710 aa).

Phosphoserine is present on residues S126 and S140. The RAP domain maps to 634–691; it reads VAVLCVSRSAYCLGSSHPRGFLAMKMRHLNAMGFHVILVNNWEMDKLEMEDAVTFLKT. The residue at position 708 (S708) is a Phosphoserine.

It belongs to the FAST kinase family. Monomer. Found in a complex with GRSF1, DDX28, DHX30 and FASTKD5. Associates with the 16S mitochondrial rRNA (16S mt-rRNA). Forms a regulatory protein-RNA complex, consisting of RCC1L, NGRN, RPUSD3, RPUSD4, TRUB2, FASTKD2 and 16S mt-rRNA. Expression detected in spleen, thymus, testis, ovary, colon, heart, smooth muscle, kidney, brain, lung, liver and white adipose tissue with highest expression in heart, smooth muscle and thyroid.

It localises to the mitochondrion matrix. It is found in the mitochondrion nucleoid. Its function is as follows. Plays an important role in assembly of the mitochondrial large ribosomal subunit. As a component of a functional protein-RNA module, consisting of RCC1L, NGRN, RPUSD3, RPUSD4, TRUB2, FASTKD2 and 16S mitochondrial ribosomal RNA (16S mt-rRNA), controls 16S mt-rRNA abundance and is required for intra-mitochondrial translation. May play a role in mitochondrial apoptosis. The sequence is that of FAST kinase domain-containing protein 2, mitochondrial from Homo sapiens (Human).